The primary structure comprises 183 residues: Apo-citrate lyase phosphoribosyl-dephospho-CoA transferase (183 aa).

This sequence belongs to the CitX family.

It carries out the reaction apo-[citrate lyase ACP] + 2'-(5''-triphospho-alpha-D-ribosyl)-3'-dephospho-CoA = holo-[citrate lyase ACP] + diphosphate. In terms of biological role, transfers 2-(5''-triphosphoribosyl)-3'-dephosphocoenzyme-A on a serine residue to the apo-acyl carrier protein (gamma chain) of the citrate lyase to yield holo-acyl carrier protein. In Escherichia coli (strain SMS-3-5 / SECEC), this protein is Apo-citrate lyase phosphoribosyl-dephospho-CoA transferase.